A 452-amino-acid chain; its full sequence is UDP-N-acetylmuramate--L-alanine ligase (452 aa).

110–116 (GTHGKTT) is an ATP binding site.

It belongs to the MurCDEF family.

Its subcellular location is the cytoplasm. It catalyses the reaction UDP-N-acetyl-alpha-D-muramate + L-alanine + ATP = UDP-N-acetyl-alpha-D-muramoyl-L-alanine + ADP + phosphate + H(+). It functions in the pathway cell wall biogenesis; peptidoglycan biosynthesis. Its function is as follows. Cell wall formation. In Francisella philomiragia subsp. philomiragia (strain ATCC 25017 / CCUG 19701 / FSC 153 / O#319-036), this protein is UDP-N-acetylmuramate--L-alanine ligase.